We begin with the raw amino-acid sequence, 508 residues long: tRNA-2-methylthio-N(6)-dimethylallyladenosine synthase (508 aa).

The tract at residues 1–21 (MNEEQRKASGQVSSSDKKSEK) is disordered. An MTTase N-terminal domain is found at 65 to 183 (RKFYIRTYGC…LPELLSECYL (119 aa)). Cys74, Cys110, Cys144, Cys220, Cys224, and Cys227 together coordinate [4Fe-4S] cluster. One can recognise a Radical SAM core domain in the interval 206–436 (RQGKIKGWVN…NALVNEISAK (231 aa)). The 64-residue stretch at 439–502 (KEYEGQTVEV…TWSLDGEMVG (64 aa)) folds into the TRAM domain.

This sequence belongs to the methylthiotransferase family. MiaB subfamily. As to quaternary structure, monomer. It depends on [4Fe-4S] cluster as a cofactor.

It is found in the cytoplasm. The enzyme catalyses N(6)-dimethylallyladenosine(37) in tRNA + (sulfur carrier)-SH + AH2 + 2 S-adenosyl-L-methionine = 2-methylsulfanyl-N(6)-dimethylallyladenosine(37) in tRNA + (sulfur carrier)-H + 5'-deoxyadenosine + L-methionine + A + S-adenosyl-L-homocysteine + 2 H(+). Catalyzes the methylthiolation of N6-(dimethylallyl)adenosine (i(6)A), leading to the formation of 2-methylthio-N6-(dimethylallyl)adenosine (ms(2)i(6)A) at position 37 in tRNAs that read codons beginning with uridine. The chain is tRNA-2-methylthio-N(6)-dimethylallyladenosine synthase from Bacillus pumilus (strain SAFR-032).